A 467-amino-acid chain; its full sequence is Ribulose bisphosphate carboxylase large chain (467 aa).

Positions 1–2 are excised as a propeptide; it reads MS. The residue at position 3 (Pro-3) is an N-acetylproline. Residue Lys-14 is modified to N6,N6,N6-trimethyllysine. Substrate contacts are provided by Asn-123 and Thr-173. The Proton acceptor role is filled by Lys-175. Residue Lys-177 coordinates substrate. Positions 201, 203, and 204 each coordinate Mg(2+). An N6-carboxylysine modification is found at Lys-201. Catalysis depends on His-294, which acts as the Proton acceptor. Substrate contacts are provided by Arg-295, His-327, and Ser-379.

Belongs to the RuBisCO large chain family. Type I subfamily. Heterohexadecamer of 8 large chains and 8 small chains; disulfide-linked. The disulfide link is formed within the large subunit homodimers. Requires Mg(2+) as cofactor. In terms of processing, the disulfide bond which can form in the large chain dimeric partners within the hexadecamer appears to be associated with oxidative stress and protein turnover.

It localises to the plastid. Its subcellular location is the chloroplast. It carries out the reaction 2 (2R)-3-phosphoglycerate + 2 H(+) = D-ribulose 1,5-bisphosphate + CO2 + H2O. It catalyses the reaction D-ribulose 1,5-bisphosphate + O2 = 2-phosphoglycolate + (2R)-3-phosphoglycerate + 2 H(+). In terms of biological role, ruBisCO catalyzes two reactions: the carboxylation of D-ribulose 1,5-bisphosphate, the primary event in carbon dioxide fixation, as well as the oxidative fragmentation of the pentose substrate in the photorespiration process. Both reactions occur simultaneously and in competition at the same active site. In Serenoa repens (Saw palmetto), this protein is Ribulose bisphosphate carboxylase large chain.